We begin with the raw amino-acid sequence, 246 residues long: Bis(5'-nucleosyl)-tetraphosphatase PrpE [asymmetrical] (246 aa).

Belongs to the PrpE family. Ni(2+) serves as cofactor.

It carries out the reaction P(1),P(4)-bis(5'-guanosyl) tetraphosphate + H2O = GMP + GTP + 2 H(+). Its function is as follows. Asymmetrically hydrolyzes Ap4p to yield AMP and ATP. This chain is Bis(5'-nucleosyl)-tetraphosphatase PrpE [asymmetrical], found in Bacillus mycoides (strain KBAB4) (Bacillus weihenstephanensis).